The primary structure comprises 250 residues: Beta-crystallin B1 (250 aa).

The interval 1 to 47 (MSQVAKAAATTAVNPGPDGKGKGTPSTGTAPAPGPTPVPASVPRPAA) is disordered. Ser-2 is modified (N-acetylserine). The tract at residues 2–56 (SQVAKAAATTAVNPGPDGKGKGTPSTGTAPAPGPTPVPASVPRPAAKVGELPPGS) is N-terminal arm. The span at 32–42 (APGPTPVPASV) shows a compositional bias: pro residues. Beta/gamma crystallin 'Greek key' domains follow at residues 57–96 (YRLV…IVLS) and 97–141 (GPWV…RPIR). Positions 142–146 (MDSQE) are connecting peptide. 2 consecutive Beta/gamma crystallin 'Greek key' domains span residues 147 to 188 (HKIC…TVSS) and 189 to 231 (GTWV…RRLR). The segment at 233–250 (RQWHQEGCFPVLTAEPPK) is C-terminal arm.

It belongs to the beta/gamma-crystallin family. As to quaternary structure, homo/heterodimer, or complexes of higher-order. The structure of beta-crystallin oligomers seems to be stabilized through interactions between the N-terminal arms. Specific cleavages in the N-terminal arm occur during lens maturation and give rise to truncated forms, leading to impaired oligomerization and protein insolubilization. The protease responsible for this partial degradation could be calpain II.

Crystallins are the dominant structural components of the vertebrate eye lens. In Rattus norvegicus (Rat), this protein is Beta-crystallin B1 (Crybb1).